A 1427-amino-acid chain; its full sequence is DNA-directed RNA polymerase subunit beta' (1427 aa).

The Zn(2+) site is built by cysteine 66, cysteine 68, cysteine 81, and cysteine 84. Residues aspartate 472, aspartate 474, and aspartate 476 each coordinate Mg(2+). Cysteine 815, cysteine 889, cysteine 896, and cysteine 899 together coordinate Zn(2+).

This sequence belongs to the RNA polymerase beta' chain family. The RNAP catalytic core consists of 2 alpha, 1 beta, 1 beta' and 1 omega subunit. When a sigma factor is associated with the core the holoenzyme is formed, which can initiate transcription. Mg(2+) serves as cofactor. Zn(2+) is required as a cofactor.

It catalyses the reaction RNA(n) + a ribonucleoside 5'-triphosphate = RNA(n+1) + diphosphate. DNA-dependent RNA polymerase catalyzes the transcription of DNA into RNA using the four ribonucleoside triphosphates as substrates. This chain is DNA-directed RNA polymerase subunit beta', found in Bacteroides thetaiotaomicron (strain ATCC 29148 / DSM 2079 / JCM 5827 / CCUG 10774 / NCTC 10582 / VPI-5482 / E50).